The chain runs to 319 residues: Ribosomal RNA large subunit methyltransferase F (319 aa).

Positions 1-25 (MAPFFSAMTSKKQSQGLPKGPHPDN) are disordered. A compositionally biased stretch (polar residues) spans 7-16 (AMTSKKQSQG).

This sequence belongs to the methyltransferase superfamily. METTL16/RlmF family.

Its subcellular location is the cytoplasm. The catalysed reaction is adenosine(1618) in 23S rRNA + S-adenosyl-L-methionine = N(6)-methyladenosine(1618) in 23S rRNA + S-adenosyl-L-homocysteine + H(+). Functionally, specifically methylates the adenine in position 1618 of 23S rRNA. The sequence is that of Ribosomal RNA large subunit methyltransferase F from Shewanella amazonensis (strain ATCC BAA-1098 / SB2B).